Consider the following 91-residue polypeptide: Probable Fe(2+)-trafficking protein (91 aa).

This sequence belongs to the Fe(2+)-trafficking protein family. In terms of assembly, monomer.

In terms of biological role, could be a mediator in iron transactions between iron acquisition and iron-requiring processes, such as synthesis and/or repair of Fe-S clusters in biosynthetic enzymes. The sequence is that of Probable Fe(2+)-trafficking protein from Escherichia coli O6:H1 (strain CFT073 / ATCC 700928 / UPEC).